A 182-amino-acid polypeptide reads, in one-letter code: Ribulose bisphosphate carboxylase small subunit, chloroplastic 6 (182 aa).

The transit peptide at 1–41 (MAATMMSKTIISSKQCSKPIAPPKVSINKGFVNTSAAIKNR) directs the protein to the chloroplast.

The protein belongs to the RuBisCO small chain family. Heterohexadecamer of 8 large and 8 small subunits.

Its subcellular location is the plastid. The protein resides in the chloroplast. In terms of biological role, ruBisCO catalyzes two reactions: the carboxylation of D-ribulose 1,5-bisphosphate, the primary event in carbon dioxide fixation, as well as the oxidative fragmentation of the pentose substrate. Both reactions occur simultaneously and in competition at the same active site. Although the small subunit is not catalytic it is essential for maximal activity. The polypeptide is Ribulose bisphosphate carboxylase small subunit, chloroplastic 6 (Acetabularia peniculus (Green alga)).